We begin with the raw amino-acid sequence, 376 residues long: Putative glutamate--cysteine ligase 2 (376 aa).

The protein belongs to the glutamate--cysteine ligase type 2 family. YbdK subfamily.

The catalysed reaction is L-cysteine + L-glutamate + ATP = gamma-L-glutamyl-L-cysteine + ADP + phosphate + H(+). In terms of biological role, ATP-dependent carboxylate-amine ligase which exhibits weak glutamate--cysteine ligase activity. The polypeptide is Putative glutamate--cysteine ligase 2 (Mycolicibacterium paratuberculosis (strain ATCC BAA-968 / K-10) (Mycobacterium paratuberculosis)).